The sequence spans 429 residues: Phosphoribosylamine--glycine ligase (429 aa).

An ATP-grasp domain is found at Lys109 to Asp316. ATP is bound at residue Leu135–Ser196. Glu286 and Asn288 together coordinate Mg(2+).

Belongs to the GARS family. As to quaternary structure, monomer. Mg(2+) is required as a cofactor. Mn(2+) serves as cofactor.

It catalyses the reaction 5-phospho-beta-D-ribosylamine + glycine + ATP = N(1)-(5-phospho-beta-D-ribosyl)glycinamide + ADP + phosphate + H(+). It participates in purine metabolism; IMP biosynthesis via de novo pathway; N(1)-(5-phospho-D-ribosyl)glycinamide from 5-phospho-alpha-D-ribose 1-diphosphate: step 2/2. This Salmonella typhi protein is Phosphoribosylamine--glycine ligase.